Consider the following 350-residue polypeptide: Probable sugar phosphate/phosphate translocator At4g32390 (350 aa).

A run of 10 helical transmembrane segments spans residues Ile-15–Tyr-35, Phe-49–Ile-69, Val-89–Tyr-109, Val-112–Leu-132, Met-146–Trp-166, Val-168–Leu-188, Val-205–Leu-225, Phe-235–Leu-255, Thr-263–Ile-283, and Thr-286–Asn-306. The region spanning Tyr-38 to Ile-155 is the EamA domain. The disordered stretch occupies residues Gln-324–Asp-350.

Belongs to the TPT transporter family. TPT (TC 2.A.7.9) subfamily.

Its subcellular location is the membrane. This is Probable sugar phosphate/phosphate translocator At4g32390 from Arabidopsis thaliana (Mouse-ear cress).